The sequence spans 209 residues: Superoxide dismutase [Mn/Fe] (209 aa).

H38, H90, D172, and H176 together coordinate Fe(3+). H38, H90, D172, and H176 together coordinate Mn(2+).

The protein belongs to the iron/manganese superoxide dismutase family. Mn(2+) serves as cofactor. It depends on Fe(3+) as a cofactor.

The enzyme catalyses 2 superoxide + 2 H(+) = H2O2 + O2. Its function is as follows. Destroys superoxide anion radicals which are normally produced within the cells and which are toxic to biological systems. Catalyzes the dismutation of superoxide anion radicals into O2 and H2O2 by successive reduction and oxidation of the transition metal ion at the active site. The chain is Superoxide dismutase [Mn/Fe] (sodB) from Rickettsia typhi (strain ATCC VR-144 / Wilmington).